We begin with the raw amino-acid sequence, 245 residues long: tRNA (guanine-N(7)-)-methyltransferase (245 aa).

Residues Glu75, Glu100, Asp127, and Asp149 each coordinate S-adenosyl-L-methionine. Asp149 is an active-site residue. Residues Lys153, Asp185, and 222–225 (TKFE) contribute to the substrate site.

This sequence belongs to the class I-like SAM-binding methyltransferase superfamily. TrmB family.

It catalyses the reaction guanosine(46) in tRNA + S-adenosyl-L-methionine = N(7)-methylguanosine(46) in tRNA + S-adenosyl-L-homocysteine. The protein operates within tRNA modification; N(7)-methylguanine-tRNA biosynthesis. In terms of biological role, catalyzes the formation of N(7)-methylguanine at position 46 (m7G46) in tRNA. The polypeptide is tRNA (guanine-N(7)-)-methyltransferase (Acinetobacter baylyi (strain ATCC 33305 / BD413 / ADP1)).